The following is a 249-amino-acid chain: Large ribosomal subunit protein uL10m (249 aa).

The transit peptide at methionine 1 to tyrosine 31 directs the protein to the mitochondrion. The interval serine 226–lysine 249 is disordered.

The protein belongs to the universal ribosomal protein uL10 family. Component of the mitochondrial large ribosomal subunit (mt-LSU). Mature yeast 74S mitochondrial ribosomes consist of a small (37S) and a large (54S) subunit. The 37S small subunit contains a 15S ribosomal RNA (15S mt-rRNA) and 34 different proteins. The 54S large subunit contains a 21S rRNA (21S mt-rRNA) and 46 different proteins.

Its subcellular location is the mitochondrion. Component of the mitochondrial ribosome (mitoribosome), a dedicated translation machinery responsible for the synthesis of mitochondrial genome-encoded proteins, including at least some of the essential transmembrane subunits of the mitochondrial respiratory chain. The mitoribosomes are attached to the mitochondrial inner membrane and translation products are cotranslationally integrated into the membrane. The chain is Large ribosomal subunit protein uL10m (MRPL11) from Saccharomyces cerevisiae (strain ATCC 204508 / S288c) (Baker's yeast).